Here is a 652-residue protein sequence, read N- to C-terminus: Phosphoglucomutase 1, chloroplastic (652 aa).

Residues 1-84 (MAFSAAASAS…LAARRTLRVR (84 aa)) constitute a chloroplast transit peptide. Alpha-D-glucose 1,6-bisphosphate contacts are provided by arginine 118 and serine 211. The active-site Phosphoserine intermediate is the serine 211. Serine 211, aspartate 376, aspartate 378, and aspartate 380 together coordinate Mg(2+). At serine 211 the chain carries Phosphoserine. Residues aspartate 380, arginine 381, threonine 443, glutamate 462, serine 464, and lysine 475 each coordinate alpha-D-glucose 1,6-bisphosphate.

This sequence belongs to the phosphohexose mutase family. The cofactor is Mg(2+).

It is found in the plastid. The protein localises to the chloroplast. The catalysed reaction is alpha-D-glucose 1-phosphate = alpha-D-glucose 6-phosphate. The enzyme catalyses O-phospho-L-seryl-[protein] + alpha-D-glucose 1-phosphate = alpha-D-glucose 1,6-bisphosphate + L-seryl-[protein]. It carries out the reaction alpha-D-glucose 1,6-bisphosphate + L-seryl-[protein] = O-phospho-L-seryl-[protein] + alpha-D-glucose 6-phosphate. With respect to regulation, inhibited by the Calvin cycle intermediates fructose-1,6-bisphosphate and ribulose-1,5-bisphosphate. Functionally, catalyzes the reversible isomerization of alpha-D-glucose 1-phosphate to alpha-D-glucose 6-phosphate. The mechanism proceeds via the intermediate compound alpha-D-glucose 1,6-bisphosphate. This enzyme participates in both the breakdown and synthesis of glucose. Required for sucrose production and accumulation necessary during plant development. Promotes gravitropic responses, negative in shoots but positive in roots, by facilitating starch granules (statoliths) formation. This Marchantia polymorpha (Common liverwort) protein is Phosphoglucomutase 1, chloroplastic.